An 88-amino-acid chain; its full sequence is Beta-insect excitatory toxin 1 (88 aa).

An N-terminal signal peptide occupies residues 1 to 18 (MKFLLLFLVVLPIMGVFG). Residues 20–83 (KNGYAVDSSG…ISDTRKSYCD (64 aa)) form the LCN-type CS-alpha/beta domain. Cystine bridges form between Cys34/Cys55, Cys40/Cys60, Cys44/Cys62, and Cys56/Cys82.

It belongs to the long (4 C-C) scorpion toxin superfamily. Sodium channel inhibitor family. Beta subfamily. Expressed by the venom gland.

It is found in the secreted. Its function is as follows. Excitatory insect beta-toxins induce a spastic paralysis. They bind voltage-independently at site-4 of sodium channels (Nav) and shift the voltage of activation toward more negative potentials thereby affecting sodium channel activation and promoting spontaneous and repetitive firing. This toxin is active only on insects. The polypeptide is Beta-insect excitatory toxin 1 (Androctonus australis (Sahara scorpion)).